Consider the following 322-residue polypeptide: MNKIYEDNSFTIGNTPLVRLNNIGNGNILAKIESRNPSFSVKCRIGANMIWDAEKKGRLNKNIEIIEATSGNTGIALAYVAAARNYSLTLIMPDSMSIERRKLLKSLGAHLILTNGKHGMKGAISKANEIVSLNTKRYLLLKQFENPANPEIHQKTTGPEIWKDTKGNIDILISGVGTGGTITGITKYIKIKEGKKDLISVAVEPLESPVITQFLSGKKIKPGLHKIQGIGAGFIPKNLDLSLIDRIITVSSEEAIFNAKKIMKKEGILSGISSGAAIAAALKIQKENDFKNKNIVVILPSSGERYLSTELFSRSFKNENNY.

Hydrogen sulfide-binding residues include N8 and R35. N6-(pyridoxal phosphate)lysine is present on K42. Residues N72 and 177-181 each bind pyridoxal 5'-phosphate; that span reads GTGGT. Position 269 (L269) interacts with hydrogen sulfide. Residue S273 participates in pyridoxal 5'-phosphate binding.

This sequence belongs to the cysteine synthase/cystathionine beta-synthase family. In terms of assembly, homodimer. The cofactor is pyridoxal 5'-phosphate.

It catalyses the reaction O-acetyl-L-serine + hydrogen sulfide = L-cysteine + acetate. It functions in the pathway amino-acid biosynthesis; L-cysteine biosynthesis; L-cysteine from L-serine: step 2/2. This Buchnera aphidicola subsp. Schizaphis graminum (strain Sg) protein is Cysteine synthase (cysK).